Here is a 250-residue protein sequence, read N- to C-terminus: MKYWGTALLGAFCVFFFTPNTAYAMHIAEGFLPAGWCLFWLALSVPFVFWGIRSIHISLRGNPHLKMLLGLAGAFVFVLSALKIPSVTGSCSHPTGVGLGAILFGPAVMSVLGCIVLLFQALLLAHGGITTLGANVFSMGVMGPLVSYGVYQLLKKRNTKVAVFLAASLGNMTTYMVTSLQLAMAFPDKTGNLLVSFFKFMSIFAITQIPLAITEGLLTVFVFNLLNNYREELYPGLPKEERSGPYDFVN.

A signal peptide spans 1–24 (MKYWGTALLGAFCVFFFTPNTAYA). Helical transmembrane passes span 32 to 52 (LPAG…FWGI), 67 to 87 (MLLG…IPSV), 99 to 119 (LGAI…VLLF), 122 to 142 (LLLA…MGVM), 161 to 181 (VAVF…TSLQ), and 203 to 223 (IFAI…VFVF).

Belongs to the CbiM family. Forms an energy-coupling factor (ECF) transporter complex composed of an ATP-binding protein (A component, CbiO), a transmembrane protein (T component, CbiQ) and 2 possible substrate-capture proteins (S components, CbiM and CbiN) of unknown stoichimetry.

It is found in the cell membrane. It functions in the pathway cofactor biosynthesis; adenosylcobalamin biosynthesis. Functionally, part of the energy-coupling factor (ECF) transporter complex CbiMNOQ involved in cobalt import. This Desulforamulus reducens (strain ATCC BAA-1160 / DSM 100696 / MI-1) (Desulfotomaculum reducens) protein is Cobalt transport protein CbiM.